Reading from the N-terminus, the 230-residue chain is MTNKEFSDGFSTLLNSFGITPNITLDEYEKSTFLTNAQEQLIIDIYSGRNIIYGKSFEQTEEIRRYLSNLVETYETSTKVTGKLGLSKDSVFFEIPQDTWFITYEVAFLKDSRLGCLDGIEASVVPLPQDDLYRAKDNPFRGPSKDRVLRLDIKSDLAELISKYNVDKYLMRYISQPTPIILVDLPDGLSINGVSTESECELNPVVHRAILERAVQLAIISKTQLTGNKE.

As to quaternary structure, homododecamer.

It is found in the virion. Forms the tail multi-ring barrel with ring protein 1, ring protein 2 and ring protein 4. The protein is Ring protein 3 of Bacteroides intestinalis (Bacteroides phage PhiCrAss001).